A 298-amino-acid polypeptide reads, in one-letter code: Syntaxin-4 (298 aa).

Residues 1-274 (MRDRTHELRQ…NQKKARKKKV (274 aa)) are Cytoplasmic-facing. Residues serine 15, serine 29, serine 36, serine 117, serine 208, and serine 248 each carry the phosphoserine modification. Positions 38-163 (DDEFFQKVQT…ERIRRQLKIT (126 aa)) form a coiled coil. Positions 154–298 (ERIRRQLKIT…VIIGITITVG (145 aa)) are interaction with CENPF. The 63-residue stretch at 200–262 (LNEISARHSE…ERGQEHVKIA (63 aa)) folds into the t-SNARE coiled-coil homology domain. A helical; Anchor for type IV membrane protein membrane pass occupies residues 275-295 (MIAICVSVTVLILAVIIGITI). The Extracellular segment spans residues 296 to 298 (TVG).

This sequence belongs to the syntaxin family. Interacts with STXBP6. Component of the SNARE complex composed of STX4, SNAP23 and VAMP7 that interacts with SYT7 during lysosomal exocytosis. Found in a complex with VAMP8 and SNAP23. Detected in a complex with SNAP23 and STXBP4. Interacts with VAMP2. Interacts with SNAP23 and SNAPIN. Interacts with LLGL1. Interacts (via C-terminus) with CENPF. Interacts with DOC2B. Interacts with STXBP3; excludes interaction with DOC2B and SNAP25. Interacts with STXBP4; excludes interaction with VAMP2. Interacts with STXBP5L. In terms of tissue distribution, expressed in the outer and inner hair cells of the cochlea.

Its subcellular location is the cell membrane. The protein resides in the cell projection. It localises to the neuron projection. The protein localises to the stereocilium. Functionally, plasma membrane t-SNARE that mediates docking of transport vesicles. Necessary for the translocation of SLC2A4 from intracellular vesicles to the plasma membrane. In neurons, recruited at neurite tips to membrane domains rich in the phospholipid 1-oleoyl-2-palmitoyl-PC (OPPC) which promotes neurite tip surface expression of the dopamine transporter SLC6A3/DAT by facilitating fusion of SLC6A3-containing transport vesicles with the plasma membrane. Together with STXB3 and VAMP2, may also play a role in docking/fusion of intracellular GLUT4-containing vesicles with the cell surface in adipocytes and in docking of synaptic vesicles at presynaptic active zones. Required for normal hearing. This chain is Syntaxin-4 (Stx4), found in Mus musculus (Mouse).